The primary structure comprises 102 residues: ATP synthase subunit c (102 aa).

2 helical membrane passes run 34–54 (IGAGVTMIAGSTVGIGQGYIF) and 80–100 (AVSESTAIYGLLISFILIFVA).

The protein belongs to the ATPase C chain family. In terms of assembly, F-type ATPases have 2 components, F(1) - the catalytic core - and F(0) - the membrane proton channel. F(1) has five subunits: alpha(3), beta(3), gamma(1), delta(1), epsilon(1). F(0) has three main subunits: a(1), b(2) and c(10-14). The alpha and beta chains form an alternating ring which encloses part of the gamma chain. F(1) is attached to F(0) by a central stalk formed by the gamma and epsilon chains, while a peripheral stalk is formed by the delta and b chains.

The protein localises to the cell membrane. Functionally, f(1)F(0) ATP synthase produces ATP from ADP in the presence of a proton or sodium gradient. F-type ATPases consist of two structural domains, F(1) containing the extramembraneous catalytic core and F(0) containing the membrane proton channel, linked together by a central stalk and a peripheral stalk. During catalysis, ATP synthesis in the catalytic domain of F(1) is coupled via a rotary mechanism of the central stalk subunits to proton translocation. Its function is as follows. Key component of the F(0) channel; it plays a direct role in translocation across the membrane. A homomeric c-ring of between 10-14 subunits forms the central stalk rotor element with the F(1) delta and epsilon subunits. The polypeptide is ATP synthase subunit c (Mycoplasma genitalium (strain ATCC 33530 / DSM 19775 / NCTC 10195 / G37) (Mycoplasmoides genitalium)).